The chain runs to 162 residues: NADH-quinone oxidoreductase subunit I (162 aa).

2 4Fe-4S ferredoxin-type domains span residues 52 to 82 and 93 to 122; these read LRRY…IEAG and TRYD…EGPN. [4Fe-4S] cluster contacts are provided by cysteine 62, cysteine 65, cysteine 68, cysteine 72, cysteine 102, cysteine 105, cysteine 108, and cysteine 112.

This sequence belongs to the complex I 23 kDa subunit family. NDH-1 is composed of 14 different subunits. Subunits NuoA, H, J, K, L, M, N constitute the membrane sector of the complex. [4Fe-4S] cluster is required as a cofactor.

The protein localises to the cell inner membrane. The catalysed reaction is a quinone + NADH + 5 H(+)(in) = a quinol + NAD(+) + 4 H(+)(out). NDH-1 shuttles electrons from NADH, via FMN and iron-sulfur (Fe-S) centers, to quinones in the respiratory chain. The immediate electron acceptor for the enzyme in this species is believed to be ubiquinone. Couples the redox reaction to proton translocation (for every two electrons transferred, four hydrogen ions are translocated across the cytoplasmic membrane), and thus conserves the redox energy in a proton gradient. This Xanthobacter autotrophicus (strain ATCC BAA-1158 / Py2) protein is NADH-quinone oxidoreductase subunit I.